The primary structure comprises 302 residues: Bifunctional protein FolD (302 aa).

NADP(+)-binding positions include 165-167 (GRS), serine 190, and isoleucine 231.

It belongs to the tetrahydrofolate dehydrogenase/cyclohydrolase family. As to quaternary structure, homodimer.

It carries out the reaction (6R)-5,10-methylene-5,6,7,8-tetrahydrofolate + NADP(+) = (6R)-5,10-methenyltetrahydrofolate + NADPH. It catalyses the reaction (6R)-5,10-methenyltetrahydrofolate + H2O = (6R)-10-formyltetrahydrofolate + H(+). Its pathway is one-carbon metabolism; tetrahydrofolate interconversion. Its function is as follows. Catalyzes the oxidation of 5,10-methylenetetrahydrofolate to 5,10-methenyltetrahydrofolate and then the hydrolysis of 5,10-methenyltetrahydrofolate to 10-formyltetrahydrofolate. The polypeptide is Bifunctional protein FolD (Prochlorococcus marinus (strain MIT 9303)).